Here is a 504-residue protein sequence, read N- to C-terminus: Maturase K (504 aa).

It belongs to the intron maturase 2 family. MatK subfamily.

The protein resides in the plastid. It is found in the chloroplast. In terms of biological role, usually encoded in the trnK tRNA gene intron. Probably assists in splicing its own and other chloroplast group II introns. This Quercus coccifera (Kermes oak) protein is Maturase K.